Here is an 852-residue protein sequence, read N- to C-terminus: Gamma-tubulin complex component 2 homolog (852 aa).

A Phosphoserine modification is found at serine 73.

Belongs to the TUBGCP family. Gamma-tubulin small complex (Gamma TuSC) is a heterotetrameric complex which contains two molecules of gamma-tubulin, and one molecule each of Dgrip84 and Dgrip91. The gamma-tubulin in this complex binds preferentially to GDP over GTP.

The protein localises to the cytoplasm. It localises to the cytoskeleton. It is found in the microtubule organizing center. Its subcellular location is the centrosome. The protein resides in the perinuclear region. This is Gamma-tubulin complex component 2 homolog (Grip84) from Drosophila melanogaster (Fruit fly).